An 86-amino-acid polypeptide reads, in one-letter code: Kappa-theraphotoxin-Cg1c (86 aa).

The signal sequence occupies residues 1–21; it reads MKVSVLITLAVLGVMFVWASA. The propeptide occupies 22–50; sequence AELEERGSDHRDSPAWLKSMERIFQSEER. 3 cysteine pairs are disulfide-bonded: Cys-52–Cys-66, Cys-59–Cys-71, and Cys-65–Cys-78.

The protein belongs to the neurotoxin 10 (Hwtx-1) family. 28 (Jztx-11) subfamily. In terms of tissue distribution, expressed by the venom gland.

The protein localises to the secreted. In terms of biological role, probable ion channel inhibitor. This Chilobrachys guangxiensis (Chinese earth tiger tarantula) protein is Kappa-theraphotoxin-Cg1c.